A 95-amino-acid chain; its full sequence is Co-chaperonin GroES (95 aa).

The protein belongs to the GroES chaperonin family. Heptamer of 7 subunits arranged in a ring. Interacts with the chaperonin GroEL.

It is found in the cytoplasm. Functionally, together with the chaperonin GroEL, plays an essential role in assisting protein folding. The GroEL-GroES system forms a nano-cage that allows encapsulation of the non-native substrate proteins and provides a physical environment optimized to promote and accelerate protein folding. GroES binds to the apical surface of the GroEL ring, thereby capping the opening of the GroEL channel. This chain is Co-chaperonin GroES, found in Ruthia magnifica subsp. Calyptogena magnifica.